The following is a 356-amino-acid chain: (+)-(1(10)E,4E,6S,7R)-germacradien-6-ol synthase (356 aa).

Mg(2+) is bound by residues Asp-86 and Asp-91. The DDXXXD motif signature appears at Asp-86–Asp-91. Residue Arg-181 participates in substrate binding. Residues Asn-227 and Ser-231 each coordinate Mg(2+). A substrate-binding site is contributed by Lys-234. Residue Glu-235 participates in Mg(2+) binding. Arg-314–Tyr-315 serves as a coordination point for substrate.

This sequence belongs to the terpene synthase family. Requires Mg(2+) as cofactor.

The catalysed reaction is (2E,6E)-farnesyl diphosphate + H2O = (+)-(1(10)E,4E,6S,7R)-germacradien-6-ol + diphosphate. Its pathway is secondary metabolite biosynthesis; terpenoid biosynthesis. Functionally, catalyzes the conversion of (2E,6E)-farnesyl diphosphate (FPP) to yield the sesquiterpene (+)-(1(10)E,4E,6S,7R)-germacradien-6-ol via a putative 1,10-cyclization, which could require the abstraction of the pyrophosphate from FPP to yield the (E,E)-germacradienyl cation. The only accepted substrate is farnesyl diphosphate (FPP). This is (+)-(1(10)E,4E,6S,7R)-germacradien-6-ol synthase from Streptomyces pratensis (strain ATCC 33331 / IAF-45CD).